The following is a 427-amino-acid chain: Adenylosuccinate synthetase (427 aa).

GTP-binding positions include 12-18 and 40-42; these read GDEGKGK and GHT. The active-site Proton acceptor is the D13. Positions 13 and 40 each coordinate Mg(2+). IMP-binding positions include 13–16, 38–41, T128, R142, Q223, T238, and R302; these read DEGK and NAGH. H41 acts as the Proton donor in catalysis. 298–304 is a substrate binding site; sequence TTTGRPR. GTP contacts are provided by residues R304, 330–332, and 412–414; these read KLD and GVG.

Belongs to the adenylosuccinate synthetase family. In terms of assembly, homodimer. It depends on Mg(2+) as a cofactor.

Its subcellular location is the cytoplasm. It catalyses the reaction IMP + L-aspartate + GTP = N(6)-(1,2-dicarboxyethyl)-AMP + GDP + phosphate + 2 H(+). It functions in the pathway purine metabolism; AMP biosynthesis via de novo pathway; AMP from IMP: step 1/2. Its function is as follows. Plays an important role in the de novo pathway of purine nucleotide biosynthesis. Catalyzes the first committed step in the biosynthesis of AMP from IMP. This chain is Adenylosuccinate synthetase, found in Pelotomaculum thermopropionicum (strain DSM 13744 / JCM 10971 / SI).